The sequence spans 492 residues: N-succinylglutamate 5-semialdehyde dehydrogenase (492 aa).

Position 220–225 (220–225 (GSANTG)) interacts with NAD(+). Catalysis depends on residues Glu243 and Cys277.

It belongs to the aldehyde dehydrogenase family. AstD subfamily.

The enzyme catalyses N-succinyl-L-glutamate 5-semialdehyde + NAD(+) + H2O = N-succinyl-L-glutamate + NADH + 2 H(+). It participates in amino-acid degradation; L-arginine degradation via AST pathway; L-glutamate and succinate from L-arginine: step 4/5. Catalyzes the NAD-dependent reduction of succinylglutamate semialdehyde into succinylglutamate. This chain is N-succinylglutamate 5-semialdehyde dehydrogenase, found in Escherichia coli O6:H1 (strain CFT073 / ATCC 700928 / UPEC).